We begin with the raw amino-acid sequence, 397 residues long: Tryptophan synthase beta chain (397 aa).

At K91 the chain carries N6-(pyridoxal phosphate)lysine.

The protein belongs to the TrpB family. As to quaternary structure, tetramer of two alpha and two beta chains. It depends on pyridoxal 5'-phosphate as a cofactor.

It catalyses the reaction (1S,2R)-1-C-(indol-3-yl)glycerol 3-phosphate + L-serine = D-glyceraldehyde 3-phosphate + L-tryptophan + H2O. It participates in amino-acid biosynthesis; L-tryptophan biosynthesis; L-tryptophan from chorismate: step 5/5. The beta subunit is responsible for the synthesis of L-tryptophan from indole and L-serine. The protein is Tryptophan synthase beta chain of Bacillus anthracis (strain A0248).